A 91-amino-acid polypeptide reads, in one-letter code: MSTSAQVPGGPAAQMKRRNNAQRQEAKASQRPTSTRSVGAGGSSSTMLKLYTDESQGLKVDPVVVMVLSLGFIFSVVALHILAKVSTKLLG.

The segment at 1-45 (MSTSAQVPGGPAAQMKRRNNAQRQEAKASQRPTSTRSVGAGGSSS) is disordered. Residues 1–62 (MSTSAQVPGG…DESQGLKVDP (62 aa)) lie on the Cytoplasmic side of the membrane. A compositionally biased stretch (polar residues) spans 30–45 (QRPTSTRSVGAGGSSS). A helical transmembrane segment spans residues 63–83 (VVVMVLSLGFIFSVVALHILA).

This sequence belongs to the SEC61-beta family. In terms of assembly, heterotrimeric complex composed of SEC61, SEB1 and SSS1.

The protein localises to the endoplasmic reticulum membrane. In terms of biological role, necessary for protein translocation in the endoplasmic reticulum. The chain is Protein transport protein Sec61 subunit beta (SBH1) from Yarrowia lipolytica (strain CLIB 122 / E 150) (Yeast).